The primary structure comprises 298 residues: Uricase (298 aa).

Active-site charge relay system residues include Lys-18 and Thr-63. Urate-binding residues include Thr-63, Asp-64, Phe-165, Arg-182, Val-229, Gln-230, and Asn-256. The Charge relay system role is filled by His-258. Residues 296–298 (ARM) carry the Microbody targeting signal motif.

This sequence belongs to the uricase family. As to quaternary structure, homotetramer; dimer of dimers.

It localises to the peroxisome. The enzyme catalyses urate + O2 + H2O = 5-hydroxyisourate + H2O2. It functions in the pathway purine metabolism; urate degradation; (S)-allantoin from urate: step 1/3. With respect to regulation, competitively inhibited by xanthine. In terms of biological role, catalyzes the oxidation of uric acid to 5-hydroxyisourate, which is further processed to form (S)-allantoin. This chain is Uricase, found in Danio rerio (Zebrafish).